The following is a 452-amino-acid chain: GTPase Der (452 aa).

EngA-type G domains follow at residues 9–170 and 185–362; these read KIIA…PEED and LQIV…KTWN. GTP contacts are provided by residues 15-22, 62-66, 124-127, 191-198, 238-242, and 303-306; these read GRPNVGKS, DTPGL, NKCE, GRPNAGKS, DTAGL, and NKWD. The KH-like domain occupies 363-448; sequence KKITTSKLNE…PIRFNYIKTK (86 aa).

The protein belongs to the TRAFAC class TrmE-Era-EngA-EngB-Septin-like GTPase superfamily. EngA (Der) GTPase family. Associates with the 50S ribosomal subunit.

Functionally, GTPase that plays an essential role in the late steps of ribosome biogenesis. In Rickettsia bellii (strain RML369-C), this protein is GTPase Der.